The following is a 523-amino-acid chain: Cytidine and dCMP deaminase domain-containing protein 1 (523 aa).

Over residues 1–11 (MKETDQMQSLE) the composition is skewed to polar residues. 2 disordered regions span residues 1 to 27 (MKETDQMQSLEGSGAERSVGTQTGSMT) and 55 to 81 (QGQKSQKTEEESRGPLGDNEELTRVST). Residues 71–169 (GDNEELTRVS…SLLTEASSSE (99 aa)) form the CMP/dCMP-type deaminase 1 domain. Zn(2+) is bound by residues histidine 110, cysteine 135, and cysteine 138. Residues 272–284 (NLRQNMKDLILLL) carry the Nuclear export signal motif. One can recognise a CMP/dCMP-type deaminase 2 domain in the interval 318-483 (EVARHCMVQA…LNPSEAYSLD (166 aa)). Residue histidine 399 participates in Zn(2+) binding. Residue glutamate 401 is the Proton donor of the active site. Residues cysteine 427 and cysteine 430 each contribute to the Zn(2+) site. The tract at residues 478 to 523 (EAYSLDPNEPERRENGVLRRRSAKDEQRSSKRPRLETRSAGRATLQ) is disordered. The span at 486–516 (EPERRENGVLRRRSAKDEQRSSKRPRLETRS) shows a compositional bias: basic and acidic residues. The short motif at 489 to 511 (RRENGVLRRRSAKDEQRSSKRPR) is the Bipartite nuclear localization signal element.

This sequence belongs to the cytidine and deoxycytidylate deaminase family. Zn(2+) serves as cofactor.

The protein localises to the cytoplasm. It is found in the nucleus. The catalysed reaction is 2'-deoxycytidine + H2O + H(+) = 2'-deoxyuridine + NH4(+). The enzyme catalyses cytidine + H2O + H(+) = uridine + NH4(+). Functionally, catalyzes the deamination of cytidine and deoxycytidine into uridine and deoxyuridine, respectively. May play an important role in testicular development and spermatogenesis. This is Cytidine and dCMP deaminase domain-containing protein 1 (Cdadc1) from Mus musculus (Mouse).